The primary structure comprises 360 residues: Phospho-N-acetylmuramoyl-pentapeptide-transferase (360 aa).

10 helical membrane-spanning segments follow: residues 27-47 (GALF…ISLL), 70-90 (GTPT…ILLW), 98-118 (VWVT…DDYL), 134-154 (LLLE…YSPA), 168-188 (TLLN…VGAG), 199-219 (GLAI…AYLV), 239-259 (LAVV…FNAP), 263-283 (IFMG…IAVA), 288-308 (IVLA…IIQV), and 337-357 (QVVI…LATL).

The protein belongs to the glycosyltransferase 4 family. MraY subfamily. It depends on Mg(2+) as a cofactor.

The protein localises to the cell inner membrane. It carries out the reaction UDP-N-acetyl-alpha-D-muramoyl-L-alanyl-gamma-D-glutamyl-meso-2,6-diaminopimeloyl-D-alanyl-D-alanine + di-trans,octa-cis-undecaprenyl phosphate = di-trans,octa-cis-undecaprenyl diphospho-N-acetyl-alpha-D-muramoyl-L-alanyl-D-glutamyl-meso-2,6-diaminopimeloyl-D-alanyl-D-alanine + UMP. The protein operates within cell wall biogenesis; peptidoglycan biosynthesis. Catalyzes the initial step of the lipid cycle reactions in the biosynthesis of the cell wall peptidoglycan: transfers peptidoglycan precursor phospho-MurNAc-pentapeptide from UDP-MurNAc-pentapeptide onto the lipid carrier undecaprenyl phosphate, yielding undecaprenyl-pyrophosphoryl-MurNAc-pentapeptide, known as lipid I. The sequence is that of Phospho-N-acetylmuramoyl-pentapeptide-transferase from Methylorubrum extorquens (strain CM4 / NCIMB 13688) (Methylobacterium extorquens).